Here is a 311-residue protein sequence, read N- to C-terminus: Dof zinc finger protein DOF1.4 (311 aa).

Positions 1 to 12 are enriched in polar residues; sequence MQSKNMIVASSH. The disordered stretch occupies residues 1–29; the sequence is MQSKNMIVASSHQQQQQQQPQQPQPQLKC. The segment covering 13 to 26 has biased composition (low complexity); the sequence is QQQQQQQPQQPQPQ. The segment at 27–81 adopts a Dof-type zinc-finger fold; that stretch reads LKCPRCDSSNTKFCYYNNYSLSQPRHFCKACKRYWTRGGTLRNVPVGGSYRKNKR. Residues C29, C32, C54, and C57 each coordinate Zn(2+). Residues 72–110 are disordered; sequence VGGSYRKNKRVKRPSTATTTTASTVSTTNSSSPNNPHQI. The span at 85-107 shows a compositional bias: low complexity; it reads PSTATTTTASTVSTTNSSSPNNP.

The protein resides in the nucleus. In terms of biological role, transcription factor that binds specifically to a 5'-AA[AG]G-3' consensus core sequence. This is Dof zinc finger protein DOF1.4 (DOF1.4) from Arabidopsis thaliana (Mouse-ear cress).